A 332-amino-acid polypeptide reads, in one-letter code: Ribosomal RNA small subunit methyltransferase H (332 aa).

Residues 39-41 (GGY), aspartate 56, phenylalanine 83, aspartate 100, and glutamine 107 contribute to the S-adenosyl-L-methionine site.

It belongs to the methyltransferase superfamily. RsmH family.

It is found in the cytoplasm. The catalysed reaction is cytidine(1402) in 16S rRNA + S-adenosyl-L-methionine = N(4)-methylcytidine(1402) in 16S rRNA + S-adenosyl-L-homocysteine + H(+). Specifically methylates the N4 position of cytidine in position 1402 (C1402) of 16S rRNA. The protein is Ribosomal RNA small subunit methyltransferase H of Bartonella tribocorum (strain CIP 105476 / IBS 506).